Reading from the N-terminus, the 65-residue chain is Orally active insecticidal peptide-3 (65 aa).

The signal sequence occupies residues 1–21 (MKTSVLFAILGLALLFCLSFG). The propeptide occupies 22–29 (VELEETGR). 3 disulfides stabilise this stretch: Cys-31/Cys-46, Cys-38/Cys-51, and Cys-45/Cys-58. Pro-62 carries the proline amide modification.

It belongs to the neurotoxin 10 (Hwtx-1) family. 46 (Jztx-7/10/12) subfamily. As to expression, expressed by the venom gland.

The protein localises to the secreted. In terms of biological role, probable ion channel inhibitor. Shows insecticidal activity when injected into mealworms. This chain is Orally active insecticidal peptide-3, found in Selenotypus plumipes (Australian featherleg tarantula).